The primary structure comprises 421 residues: MLNASPLQTLDPQVFSAISEELARQQSHIELIASENFTYPAVMEAQGSVLTNKYAEGYPAKRWYGGCEFVDKVEVLAIERAKKLFGAEHANVQPHSGAQANTAVYAAVLQPGDKVLGMNLSHGGHLTHGNPANFSGKLYQFCQYGVREDNGLIDYDELAATADREKPKMITVGASAYSRIIDFARMGEIARGVGAYLFADIAHIAGLVAAGAHPSPVPHADFVSTTTHKTLRGPRGGLVLCKAAHAKALDSAVFPGTQGGPLMHIIAAKAVCFGECLKPEFKAYSEQIVKNSKALAAAFLSRGYKIVSGGTDNHLFLVDLRTKYPELTAKKAQETLDLANITCNKNTVPFETRSPFQASGIRLGTPAVTTRGFREAHMADIADCIDSVLAAIGTEREAVVVAATKKRVTTLTSRFPLPYQL.

(6S)-5,6,7,8-tetrahydrofolate contacts are provided by residues Leu120 and 124–126; that span reads GHL. Lys229 carries the post-translational modification N6-(pyridoxal phosphate)lysine. Residue 354–356 coordinates (6S)-5,6,7,8-tetrahydrofolate; the sequence is SPF.

It belongs to the SHMT family. In terms of assembly, homodimer. Pyridoxal 5'-phosphate serves as cofactor.

The protein resides in the cytoplasm. It carries out the reaction (6R)-5,10-methylene-5,6,7,8-tetrahydrofolate + glycine + H2O = (6S)-5,6,7,8-tetrahydrofolate + L-serine. Its pathway is one-carbon metabolism; tetrahydrofolate interconversion. The protein operates within amino-acid biosynthesis; glycine biosynthesis; glycine from L-serine: step 1/1. In terms of biological role, catalyzes the reversible interconversion of serine and glycine with tetrahydrofolate (THF) serving as the one-carbon carrier. This reaction serves as the major source of one-carbon groups required for the biosynthesis of purines, thymidylate, methionine, and other important biomolecules. Also exhibits THF-independent aldolase activity toward beta-hydroxyamino acids, producing glycine and aldehydes, via a retro-aldol mechanism. The polypeptide is Serine hydroxymethyltransferase (Opitutus terrae (strain DSM 11246 / JCM 15787 / PB90-1)).